Reading from the N-terminus, the 64-residue chain is Large ribosomal subunit protein eL24 (64 aa).

Zn(2+)-binding residues include cysteine 6, cysteine 9, cysteine 32, and cysteine 36. A C4-type zinc finger spans residues 6–36 (CNFCGKSIEPGTGKKFVKKDGSVMFICSSKC).

It belongs to the eukaryotic ribosomal protein eL24 family. As to quaternary structure, part of the 50S ribosomal subunit. Forms a cluster with proteins L3 and L14. Zn(2+) serves as cofactor.

In terms of biological role, binds to the 23S rRNA. The polypeptide is Large ribosomal subunit protein eL24 (Methanococcus aeolicus (strain ATCC BAA-1280 / DSM 17508 / OCM 812 / Nankai-3)).